The chain runs to 165 residues: Putative protein FAM86C1P (165 aa).

This sequence belongs to the class I-like SAM-binding methyltransferase superfamily. EEF2KMT family. As to quaternary structure, interacts with EEF2KMT.

This is Putative protein FAM86C1P from Homo sapiens (Human).